The following is a 139-amino-acid chain: Large ribosomal subunit protein bL9m (139 aa).

The tract at residues 83–121 (DHQQLSKRHETEVQKNMELRKESVFGHKKEEKPKEEKKG) is disordered.

This sequence belongs to the bacterial ribosomal protein bL9 family. Component of the mitochondrial large ribosomal subunit (mt-LSU). Mature yeast 74S mitochondrial ribosomes consist of a small (37S) and a large (54S) subunit. The 37S small subunit contains a 15S ribosomal RNA (15S mt-rRNA) and 34 different proteins. The 54S large subunit contains a 21S rRNA (21S mt-rRNA) and 46 different proteins.

The protein localises to the mitochondrion. Functionally, component of the mitochondrial ribosome (mitoribosome), a dedicated translation machinery responsible for the synthesis of mitochondrial genome-encoded proteins, including at least some of the essential transmembrane subunits of the mitochondrial respiratory chain. The mitoribosomes are attached to the mitochondrial inner membrane and translation products are cotranslationally integrated into the membrane. This chain is Large ribosomal subunit protein bL9m (MRPL50), found in Saccharomyces cerevisiae (strain ATCC 204508 / S288c) (Baker's yeast).